A 475-amino-acid chain; its full sequence is Ankyrin repeat, SAM and basic leucine zipper domain-containing protein 1 (475 aa).

The interval 1 to 25 is disordered; it reads MAAGALRGLPVAGGGESSESEDDGW. A phosphoserine mark is found at Ser-17, Ser-18, and Ser-20. ANK repeat units follow at residues 45-74, 78-107, 110-144, 148-177, 181-210, and 214-243; these read EKKE…SVDS, YGWT…NASF, DKQS…DPNV, RLMT…EVNT, NGYT…NKML, and DGKM…PLEG. The SAM domain maps to 272–334; that stretch reads SYTAFGDLEV…KILAALKELQ (63 aa).

In terms of assembly, interacts with DDX4, PIWIL1, RANBP9 and TDRD1.

The protein resides in the cytoplasm. In terms of biological role, plays a central role during spermatogenesis by repressing transposable elements and preventing their mobilization, which is essential for the germline integrity. Acts via the piRNA metabolic process, which mediates the repression of transposable elements during meiosis by forming complexes composed of piRNAs and Piwi proteins and governs the methylation and subsequent repression of transposons. Its association with pi-bodies suggests a participation in the primary piRNAs metabolic process. Required prior to the pachytene stage to facilitate the production of multiple types of piRNAs, including those associated with repeats involved in the regulation of retrotransposons. May act by mediating protein-protein interactions during germ cell maturation. This Nomascus leucogenys (Northern white-cheeked gibbon) protein is Ankyrin repeat, SAM and basic leucine zipper domain-containing protein 1 (ASZ1).